The sequence spans 283 residues: Biotin synthase (283 aa).

One can recognise a Radical SAM core domain in the interval 3 to 232 (KISNEIFLCS…NTRLMIAGGR (230 aa)). The [4Fe-4S] cluster site is built by Cys21, Cys25, and Cys28. Residues Cys65, Cys100, and Arg225 each coordinate [2Fe-2S] cluster.

It belongs to the radical SAM superfamily. Biotin synthase family. In terms of assembly, homodimer. The cofactor is [4Fe-4S] cluster. [2Fe-2S] cluster serves as cofactor.

It catalyses the reaction (4R,5S)-dethiobiotin + (sulfur carrier)-SH + 2 reduced [2Fe-2S]-[ferredoxin] + 2 S-adenosyl-L-methionine = (sulfur carrier)-H + biotin + 2 5'-deoxyadenosine + 2 L-methionine + 2 oxidized [2Fe-2S]-[ferredoxin]. Its pathway is cofactor biosynthesis; biotin biosynthesis; biotin from 7,8-diaminononanoate: step 2/2. Functionally, catalyzes the conversion of dethiobiotin (DTB) to biotin by the insertion of a sulfur atom into dethiobiotin via a radical-based mechanism. The protein is Biotin synthase of Helicobacter hepaticus (strain ATCC 51449 / 3B1).